The sequence spans 494 residues: Pre-hexon-linking protein IIIa (494 aa).

The peripentonal hexon-tethering domain stretch occupies residues 1 to 101; sequence MAALSPTVRA…ALLQRVGRYN (101 aa). Residues 132–245 are binding to hexon-linking protein; the sequence is GSLVALNGFL…FTDSRTVNGD (114 aa). Phosphothreonine; by host is present on Thr268. Phosphoserine; by host is present on residues Ser439 and Ser456. A propeptide spanning residues 484-494 is cleaved from the precursor; sequence TNPFKHLQPQF.

Belongs to the adenoviridae hexon-linking protein IIIa family. In terms of assembly, interacts with hexon proteins; this interaction tethers the peripentonal hexons to hexons situated in the facet. Interacts with the penton protein (via N-terminus). Interacts with packaging protein 3; this interaction is required to promote correct genome packaging. In terms of processing, cleaved near the C-terminus by the viral protease during virion maturation to form the mature protein.

The protein localises to the virion. It is found in the host nucleus. Its function is as follows. Structural component of the virion that acts as a cement protein on the capsid exterior which mediates the interactions between the hexons, including the peripentonal hexons, and reaches all the way to the penton vertices. Two hexon linking proteins IIIa, one from each facet, stabilize the unique edge interface between a pair of facets. As the virus enters the host cell, hexon linking proteins IIIa are shed concomitant with virion acidification in the endosome. During virus assembly, seems to play a role in the serotype specificity of the packaging of viral DNA via its interaction with packaging protein 3. The sequence is that of Pre-hexon-linking protein IIIa from Murine adenovirus A serotype 1 (MAdV-1).